Consider the following 278-residue polypeptide: ADP-dependent (S)-NAD(P)H-hydrate dehydratase (278 aa).

One can recognise a YjeF C-terminal domain in the interval 4–276 (DDDLVRQVIR…KAIPSWMKKL (273 aa)). (6S)-NADPHX-binding residues include alanine 39, glycine 102, and histidine 152. An AMP-binding site is contributed by glycine 216. A (6S)-NADPHX-binding site is contributed by aspartate 217.

This sequence belongs to the NnrD/CARKD family. Homotetramer. The cofactor is Mg(2+).

It catalyses the reaction (6S)-NADHX + ADP = AMP + phosphate + NADH + H(+). It carries out the reaction (6S)-NADPHX + ADP = AMP + phosphate + NADPH + H(+). Functionally, catalyzes the dehydration of the S-form of NAD(P)HX at the expense of ADP, which is converted to AMP. Together with NAD(P)HX epimerase, which catalyzes the epimerization of the S- and R-forms, the enzyme allows the repair of both epimers of NAD(P)HX, a damaged form of NAD(P)H that is a result of enzymatic or heat-dependent hydration. The protein is ADP-dependent (S)-NAD(P)H-hydrate dehydratase of Streptococcus thermophilus.